Here is a 1058-residue protein sequence, read N- to C-terminus: Leucine--tRNA ligase, cytoplasmic (1058 aa).

A 'HIGH' region motif is present at residues 48-58 (PYMNGRLHVGH). The short motif at 711–715 (KMSKS) is the 'KMSKS' region element. K714 contributes to the ATP binding site.

This sequence belongs to the class-I aminoacyl-tRNA synthetase family.

It is found in the cytoplasm. It carries out the reaction tRNA(Leu) + L-leucine + ATP = L-leucyl-tRNA(Leu) + AMP + diphosphate. This Dictyostelium discoideum (Social amoeba) protein is Leucine--tRNA ligase, cytoplasmic (leuS).